Consider the following 400-residue polypeptide: Snake venom metalloproteinase H2 (400 aa).

The signal sequence occupies residues 1–6 (FPYQGS). Residues 7-176 (STILESGNVN…KKASQLIVST (170 aa)) constitute a propeptide that is removed on maturation. The Peptidase M12B domain occupies 180-377 (RYMEIVIVVD…ENPPCILNKP (198 aa)). Ca(2+)-binding residues include Glu-183 and Asp-267. 3 disulfide bridges follow: Cys-291–Cys-372, Cys-331–Cys-356, and Cys-333–Cys-339. His-316 is a binding site for Zn(2+). The active site involves Glu-317. Zn(2+)-binding residues include His-320 and His-326. Ca(2+)-binding residues include Cys-372, Asn-375, Val-387, Asn-390, Leu-392, Glu-394, and Asp-400. A propeptide spanning residues 378 to 400 (LRTDTVSTPVSGNELLEAGKDYD) is cleaved from the precursor.

It belongs to the venom metalloproteinase (M12B) family. P-I subfamily. In terms of assembly, monomer. The cofactor is Zn(2+). Expressed by the venom gland.

It localises to the secreted. Its function is as follows. Snake venom metalloproteinase that impairs hemostasis in the envenomed animal. The polypeptide is Snake venom metalloproteinase H2 (Deinagkistrodon acutus (Hundred-pace snake)).